The following is a 197-amino-acid chain: Caspase recruitment domain-containing protein 16 (197 aa).

One can recognise a CARD domain in the interval 1 to 91 (MADKVLKEKR…YLAETLGLSA (91 aa)).

As to quaternary structure, homooligomer. Interacts with CASP1, CASP4, CARD8 and RIPK2. Widely expressed. Expressed at higher level in placenta, spleen, lymph node and bone marrow. Weakly or not expressed in thymus.

Functionally, caspase inhibitor. Acts as a regulator of procaspase-1/CASP1 activation implicated in the regulation of the proteolytic maturation of pro-interleukin-1 beta (IL1B) and its release during inflammation. Inhibits the release of IL1B in response to LPS in monocytes. Also induces NF-kappa-B activation during the pro-inflammatory cytokine response. Also able to inhibit CASP1-mediated neuronal cell death, TNF-alpha, hypoxia-, UV-, and staurosporine-mediated cell death but not ER stress-mediated cell death. Acts by preventing activation of caspases CASP1 and CASP4, possibly by preventing the interaction between CASP1 and RIPK2. The polypeptide is Caspase recruitment domain-containing protein 16 (CARD16) (Homo sapiens (Human)).